A 101-amino-acid polypeptide reads, in one-letter code: uncharacterized protein (101 aa).

Positions 1-12 (MAAFQHRAKRSK) are enriched in basic residues. 2 disordered regions span residues 1 to 30 (MAAF…KKRA) and 65 to 87 (AQDQ…NVDK). Residues 65–78 (AQDQRSDAQAQQQR) show a composition bias toward low complexity.

This is an uncharacterized protein from Eremothecium gossypii (strain ATCC 10895 / CBS 109.51 / FGSC 9923 / NRRL Y-1056) (Yeast).